Reading from the N-terminus, the 101-residue chain is Acylphosphatase (101 aa).

The Acylphosphatase-like domain occupies 15 to 101 (RMYARVYGLV…KGEFEDFETY (87 aa)). Active-site residues include Arg-30 and Asn-48.

It belongs to the acylphosphatase family.

It carries out the reaction an acyl phosphate + H2O = a carboxylate + phosphate + H(+). The chain is Acylphosphatase (acyP) from Saccharolobus solfataricus (strain ATCC 35092 / DSM 1617 / JCM 11322 / P2) (Sulfolobus solfataricus).